A 958-amino-acid polypeptide reads, in one-letter code: Coiled-coil domain-containing protein 187 (958 aa).

Positions 116–132 (SSVSSGRMSGSSGGHES) are enriched in low complexity. Disordered regions lie at residues 116–160 (SSVS…SDPR), 345–447 (ELTR…PRFF), 470–492 (QDISVQKSGSSLKKPSPFSQRPW), and 510–602 (EPSP…KAQA). Polar residues-rich tracts occupy residues 374-398 (LQSTQDMQGSSKTAWTVTEGKNSSL) and 470-491 (QDISVQKSGSSLKKPSPFSQRP). A compositionally biased stretch (low complexity) spans 536–545 (SSPSSKGKSA). The stretch at 718-743 (KQARLQALETMAEALRQRVDILTTKL) forms a coiled coil. The disordered stretch occupies residues 916 to 958 (EVKKEGLVTPWTTRSCGKGEPADRPWAGWSGGQGGLPWASSTA).

This Mus musculus (Mouse) protein is Coiled-coil domain-containing protein 187.